Consider the following 209-residue polypeptide: Orotate phosphoribosyltransferase (209 aa).

5-phospho-alpha-D-ribose 1-diphosphate-binding positions include arginine 96, lysine 100, histidine 102, and 122 to 130 (EDLISTGGS). Residue serine 126 participates in orotate binding.

The protein belongs to the purine/pyrimidine phosphoribosyltransferase family. PyrE subfamily. In terms of assembly, homodimer. The cofactor is Mg(2+).

The catalysed reaction is orotidine 5'-phosphate + diphosphate = orotate + 5-phospho-alpha-D-ribose 1-diphosphate. The protein operates within pyrimidine metabolism; UMP biosynthesis via de novo pathway; UMP from orotate: step 1/2. In terms of biological role, catalyzes the transfer of a ribosyl phosphate group from 5-phosphoribose 1-diphosphate to orotate, leading to the formation of orotidine monophosphate (OMP). This chain is Orotate phosphoribosyltransferase, found in Streptococcus sanguinis (strain SK36).